The following is a 139-amino-acid chain: Nucleoside diphosphate kinase (139 aa).

ATP is bound by residues Lys11, Phe59, Arg87, Thr93, Arg104, and Asn114. Residue His117 is the Pros-phosphohistidine intermediate of the active site.

This sequence belongs to the NDK family. Homotetramer. The cofactor is Mg(2+).

It localises to the cytoplasm. It carries out the reaction a 2'-deoxyribonucleoside 5'-diphosphate + ATP = a 2'-deoxyribonucleoside 5'-triphosphate + ADP. The catalysed reaction is a ribonucleoside 5'-diphosphate + ATP = a ribonucleoside 5'-triphosphate + ADP. Its function is as follows. Major role in the synthesis of nucleoside triphosphates other than ATP. The ATP gamma phosphate is transferred to the NDP beta phosphate via a ping-pong mechanism, using a phosphorylated active-site intermediate. The sequence is that of Nucleoside diphosphate kinase from Coxiella burnetii (strain CbuK_Q154) (Coxiella burnetii (strain Q154)).